Consider the following 216-residue polypeptide: MRLLHLDSSILTDTSVSRRLTAQVVQDLHAAIDDLHATYRDLAAAPIAHLSGAIAAGFRPLPQPDSDAASVAEHALSEQLVDEFLASDIVVIGAPMYNFSVPTQLKAWIDRIAQPGRTFRYTANGPEGLAGGKQLIVASSRGGMYAQGPMASLDFQEAYLTATFGFLGVRDVYFVRAENQSRGPGPAAAALISAQASIADVVRSVARGVVHTRVEA.

FMN-binding positions include S9, 15–17, 96–99, and 140–143; these read SVS, MYNF, and SRGG.

This sequence belongs to the azoreductase type 1 family. In terms of assembly, homodimer. FMN is required as a cofactor.

It carries out the reaction 2 a quinone + NADH + H(+) = 2 a 1,4-benzosemiquinone + NAD(+). It catalyses the reaction N,N-dimethyl-1,4-phenylenediamine + anthranilate + 2 NAD(+) = 2-(4-dimethylaminophenyl)diazenylbenzoate + 2 NADH + 2 H(+). Quinone reductase that provides resistance to thiol-specific stress caused by electrophilic quinones. Its function is as follows. Also exhibits azoreductase activity. Catalyzes the reductive cleavage of the azo bond in aromatic azo compounds to the corresponding amines. The polypeptide is FMN-dependent NADH:quinone oxidoreductase 2 (Xanthomonas axonopodis pv. citri (strain 306)).